Here is a 530-residue protein sequence, read N- to C-terminus: Glucose-6-phosphate isomerase (530 aa).

Glutamate 322 serves as the catalytic Proton donor. Residues histidine 351 and lysine 455 contribute to the active site.

This sequence belongs to the GPI family.

It localises to the cytoplasm. It carries out the reaction alpha-D-glucose 6-phosphate = beta-D-fructose 6-phosphate. The protein operates within carbohydrate biosynthesis; gluconeogenesis. It functions in the pathway carbohydrate degradation; glycolysis; D-glyceraldehyde 3-phosphate and glycerone phosphate from D-glucose: step 2/4. In terms of biological role, catalyzes the reversible isomerization of glucose-6-phosphate to fructose-6-phosphate. This is Glucose-6-phosphate isomerase from Geobacter sp. (strain M21).